Here is a 537-residue protein sequence, read N- to C-terminus: Senescence-associated carboxylesterase 101 (537 aa).

Positions 1 to 27 are cleaved as a signal peptide; that stretch reads MESSSSLKGSALGKLVVTSGLLHSSWS. Residues 140-160 traverse the membrane as a helical segment; it reads VIITGAALGGSVASLYTLWLL.

As to quaternary structure, part of a nuclear complex made of EDS1, PAD4 and SAG101, that can be redirected to the cytoplasm in the presence of an extranuclear form of EDS1. Interacts directly with EDS1. As to expression, expressed in senescing leaves.

The protein resides in the membrane. The protein localises to the nucleus. It localises to the cytoplasm. The catalysed reaction is a carboxylic ester + H2O = an alcohol + a carboxylate + H(+). In terms of biological role, acyl hydrolase that triggers the leaf senescence onset. Can use triolein as substrate to produce oleic acids. Its function is as follows. Involved in the EDS1-dependent intrinsic and indispensable resistance signaling pathway; together with PAD4, required for programmed cell death triggered by RPS4 in response to avirulent pathogens (e.g. P.syringae pv. tomato strain DC3000 and H.parasitica isolates CALA2 and EMWA1) and in restricting the growth of virulent pathogens (e.g. H.parasitica isolates NOCO2 and P.syringae pv. tomato strain DC3000 avrRps4). Contributes in reinforcing the immune response around hypersensitive response foci. Regulates the nuclear localization of EDS1. Essential for the RPP8/HRT-mediated resistance to the turnip crinkle virus (TCV). Involved in the post-invasion resistance to P.pachyrhizi in the mesophyll. The chain is Senescence-associated carboxylesterase 101 (SAG101) from Arabidopsis thaliana (Mouse-ear cress).